The primary structure comprises 312 residues: Olfactory receptor 7D4 (312 aa).

Residues 1 to 25 (MEAENLTELSKFLLLGLSDDPELQP) lie on the Extracellular side of the membrane. N5 carries an N-linked (GlcNAc...) asparagine glycan. Residues 26–46 (VLFGLFLSMYLVTVLGNLLII) traverse the membrane as a helical segment. Residues 47–54 (LAVSSDSH) lie on the Cytoplasmic side of the membrane. The helical transmembrane segment at 55–75 (LHTPMYFFLSNLSFVDICFIS) threads the bilayer. At 76 to 99 (TTVPKMLVSIQARSKDISYMGCLT) the chain is on the extracellular side. A disulfide bridge connects residues C97 and C189. Residues 100–120 (QVYFLMMFAGMDTFLLAVMAY) form a helical membrane-spanning segment. The Cytoplasmic portion of the chain corresponds to 121–139 (DRFVAICHPLHYTVIMNPC). Residues 140 to 160 (LCGLLVLASWFIIFWFSLVHI) traverse the membrane as a helical segment. The Extracellular segment spans residues 161-197 (LLMKRLTFSTGTEIPHFFCEPAQVLKVACSNTLLNNI). The chain crosses the membrane as a helical span at residues 198-217 (VLYVATALLGVFPVAGILFS). Over 218–237 (YSQIVSSLMGMSSTKGKYKA) the chain is Cytoplasmic. A helical membrane pass occupies residues 238 to 258 (FSTCGSHLCVVSLFYGTGLGV). Topologically, residues 259–271 (YLSSAVTHSSQSS) are extracellular. A helical transmembrane segment spans residues 272–292 (STASVMYAMVTPMLNPFIYSL). Topologically, residues 293–312 (RNKDVKGALERLLSRADSCP) are cytoplasmic.

Belongs to the G-protein coupled receptor 1 family. Nasal olfactory epithelium.

The protein localises to the cell membrane. Odorant receptor. Selectively activated by androstenone and the related odorous steroid androstadienone. This chain is Olfactory receptor 7D4 (OR7D4), found in Homo sapiens (Human).